A 175-amino-acid chain; its full sequence is Large ribosomal subunit protein uL6 (175 aa).

This sequence belongs to the universal ribosomal protein uL6 family. Part of the 50S ribosomal subunit.

Functionally, this protein binds to the 23S rRNA, and is important in its secondary structure. It is located near the subunit interface in the base of the L7/L12 stalk, and near the tRNA binding site of the peptidyltransferase center. This Xanthomonas oryzae pv. oryzae (strain MAFF 311018) protein is Large ribosomal subunit protein uL6.